The primary structure comprises 424 residues: MLDIRLIREQPDLVKASLGRTGVDPAQVDAVLAYDEQRRALLREVEQLKALRNAVSKEIGKMSDAAARDAKIAEMRAVGDRIAELDRELAAVEEQQYAALMELRNLPHPSVPDGPDETYNVVIAQEGEPRTFDFTPKPHWELGEALDIIDFERGVKLSGSRFYVLKGPGARLQRALIQWMLDLHGKQGYDEVYTPFVVKEQCMWGARQLPKFRDNLYRDVEDDLWLVPTAEVPVTNLHRDEILDADQLPLRYCAYTPCFRREKMSAGRDVRGIKRGHQFDKVEMYMFVRPETSYDELEKLRADAEETCRLLGLPFRTKELCTGDLGFAATRTYDIEVWAPGQGEWLEVSSCSNVEAFQARAANIRYRPEPGARPEYVHTLNGSGLGLPRTLIAILENYQQADGSVVIPEVLRPYMGGIEVIRRT.

Position 229–231 (229–231) interacts with L-serine; that stretch reads TAE. 260 to 262 contributes to the ATP binding site; that stretch reads RRE. E283 lines the L-serine pocket. Residue 347 to 350 participates in ATP binding; the sequence is EVSS. S383 lines the L-serine pocket.

Belongs to the class-II aminoacyl-tRNA synthetase family. Type-1 seryl-tRNA synthetase subfamily. Homodimer. The tRNA molecule binds across the dimer.

It is found in the cytoplasm. The catalysed reaction is tRNA(Ser) + L-serine + ATP = L-seryl-tRNA(Ser) + AMP + diphosphate + H(+). The enzyme catalyses tRNA(Sec) + L-serine + ATP = L-seryl-tRNA(Sec) + AMP + diphosphate + H(+). Its pathway is aminoacyl-tRNA biosynthesis; selenocysteinyl-tRNA(Sec) biosynthesis; L-seryl-tRNA(Sec) from L-serine and tRNA(Sec): step 1/1. Functionally, catalyzes the attachment of serine to tRNA(Ser). Is also able to aminoacylate tRNA(Sec) with serine, to form the misacylated tRNA L-seryl-tRNA(Sec), which will be further converted into selenocysteinyl-tRNA(Sec). This Roseiflexus sp. (strain RS-1) protein is Serine--tRNA ligase.